Here is a 177-residue protein sequence, read N- to C-terminus: Nuclear export protein (177 aa).

2 consecutive short sequence motifs (nuclear export signal) follow at residues 91–100 and 117–127; these read LWLPMKSLSL and MKHQILTRLKL.

Binds M1 protein. May interact with human nucleoporins and exportin XPO1/CRM1.

It is found in the virion. It localises to the host nucleus. Mediates the nuclear export of encapsidated genomic RNAs (ribonucleoproteins, RNPs). Acts as an adapter between viral RNPs complexes and the nuclear export machinery of the cell. Possesses no intrinsic RNA-binding activity, but includes a C-terminal M1-binding domain. This domain is believed to allow recognition of RNPs to which the M1 protein is bound. Because the M1 protein is not available in large quantities until the later stages of infection, such an indirect recognition mechanism probably ensures that genomic RNPs are not exported from the nucleus before sufficient quantities of viral mRNA and progeny genomic RNA have been synthesized. Furthermore, the RNPs enters the cytoplasm only when they have associated with the M1 protein that is necessary to guide them to the plasma membrane. May down-regulate viral RNA synthesis when overproduced. The protein is Nuclear export protein (NS) of Homo sapiens (Human).